Reading from the N-terminus, the 196-residue chain is Endonuclease V (196 aa).

Residues Asp37 and Asp98 each coordinate Mg(2+).

This sequence belongs to the endonuclease V family. The cofactor is Mg(2+).

Its subcellular location is the cytoplasm. It carries out the reaction Endonucleolytic cleavage at apurinic or apyrimidinic sites to products with a 5'-phosphate.. Functionally, DNA repair enzyme involved in the repair of deaminated bases. Selectively cleaves double-stranded DNA at the second phosphodiester bond 3' to a deoxyinosine leaving behind the intact lesion on the nicked DNA. The chain is Endonuclease V from Sulfolobus acidocaldarius (strain ATCC 33909 / DSM 639 / JCM 8929 / NBRC 15157 / NCIMB 11770).